The chain runs to 753 residues: Nibrin (753 aa).

The FHA domain occupies 22-81 (YVVGRKNCAFLIQDDQSISRSHAVLTVSRPETTHSQSVSVPVLTIKDTSKYGTFVNGSKL). 2 consecutive BRCT domains span residues 101–191 (SKFR…PTPE) and 221–311 (GKTF…LAVI). Serine 274 is subject to Phosphoserine. Serine 343 is subject to Phosphoserine; by ATM. Residues 442-606 (RECTPRQQSN…NTKQREENEM (165 aa)) are disordered. Residues 446-455 (PRQQSNSITN) are compositionally biased toward polar residues. The short motif at 461 to 467 (RKRERAE) is the Nuclear localization signal element. Residues 490–500 (CTESSASSAWN) show a composition bias toward polar residues. The span at 517–528 (ESGELASDKTDI) shows a compositional bias: basic and acidic residues. Polar residues predominate over residues 568–577 (QTANGDQEAQ). A compositionally biased stretch (basic and acidic residues) spans 585 to 606 (CLETKGSRTEEGNTKQREENEM). The FxF/Y motif signature appears at 739–748 (ADDLFRYDPN).

It belongs to the Nibrin family. In terms of assembly, component of the MRN complex composed of two heterodimers RAD50 and mre11 associated with a single NBN.

The protein localises to the nucleus. Its subcellular location is the chromosome. The protein resides in the PML body. It localises to the telomere. Functionally, component of the MRN complex, which plays a central role in double-strand break (DSB) repair, DNA recombination, maintenance of telomere integrity and meiosis. The MRN complex is involved in the repair of DNA double-strand breaks (DSBs) via homologous recombination (HR), an error-free mechanism which primarily occurs during S and G2 phases. The complex (1) mediates the end resection of damaged DNA, which generates proper single-stranded DNA, a key initial steps in HR, and is (2) required for the recruitment of other repair factors and efficient activation of ATM and ATR upon DNA damage. The MRN complex possesses single-strand endonuclease activity and double-strand-specific 3'-5' exonuclease activity, which are provided by MRE11, to initiate end resection, which is required for single-strand invasion and recombination. Within the MRN complex, NBN acts as a protein-protein adapter, which specifically recognizes and binds phosphorylated proteins, promoting their recruitment to DNA damage sites. Recruits MRE11 and RAD50 components of the MRN complex to DSBs in response to DNA damage. Promotes the recruitment of PI3/PI4-kinase family members ATM, ATR, and probably DNA-PKcs to the DNA damage sites, activating their functions. Mediates the recruitment of phosphorylated RBBP8/CtIP to DSBs, leading to cooperation between the MRN complex and RBBP8/CtIP to initiate end resection. The MRN complex and rbbp8/CtIP are also required for chromosome alignment during metaphase. The sequence is that of Nibrin (NBN) from Gallus gallus (Chicken).